Here is a 594-residue protein sequence, read N- to C-terminus: KIF-binding protein (594 aa).

Belongs to the KIF-binding protein family.

It is found in the cytoplasm. The protein localises to the cytoskeleton. Its function is as follows. Activator of KIF1B plus-end-directed microtubule motor activity. Required for organization of axonal microtubules, and axonal outgrowth and maintenance during peripheral and central nervous system development. This is KIF-binding protein (Kifbp) from Gallus gallus (Chicken).